Reading from the N-terminus, the 135-residue chain is uncharacterized protein (135 aa).

The HTH hxlR-type domain maps to cysteine 25–serine 123.

This is an uncharacterized protein from Synechocystis sp. (strain ATCC 27184 / PCC 6803 / Kazusa).